The following is a 1072-amino-acid chain: Isoleucine--tRNA ligase, cytoplasmic (1072 aa).

A 'HIGH' region motif is present at residues 47 to 57; the sequence is PFATGTPHYGH. Residue Lys486 forms a Glycyl lysine isopeptide (Lys-Gly) (interchain with G-Cter in ubiquitin) linkage. A 'KMSKS' region motif is present at residues 602-606; the sequence is KMSKS. Lys605 provides a ligand contact to ATP. Residues Ser829 and Ser1059 each carry the phosphoserine modification.

Belongs to the class-I aminoacyl-tRNA synthetase family.

The protein localises to the cytoplasm. It carries out the reaction tRNA(Ile) + L-isoleucine + ATP = L-isoleucyl-tRNA(Ile) + AMP + diphosphate. The polypeptide is Isoleucine--tRNA ligase, cytoplasmic (ILS1) (Saccharomyces cerevisiae (strain ATCC 204508 / S288c) (Baker's yeast)).